The sequence spans 629 residues: MSIKAKNAAHLRESAQVDSGSVQPFTRSQKIYVQGSRPDIRVPMREITLDVTPTDFGGEINAPVTVYDTSGPYTDPNVIIDVRKGLADVRSPWIDSRNDTERLPGLSSNFGQQRLSDAELTALRFAHVRNPRRAKAGANVSQMHYARQGIITAEMEYVAIRENMKLQEARAAGLLTQQHAGHSFGASIPKEITAEFVREEIARGRAIIPANINHVELEPMIIGRNFLVKINGNIGNSALGSSIEEEVAKLTWGIRWGSDTVMDLSTGKHIHETREWIIRNSPVPIGTVPIYQALEKVGGAAEDLTWELFRDTLIEQAEQGVDYFTIHAGVLLRYVPLTAKRVTGIVSRGGSIMAKWCLAHHKENFLYTHFEDICEIMKAYDVSFSLGDGLRPGSIADANDAAQFGELETLGELTKIAWKHDVQTMIEGPGHVPMQLIKENMDKQLECCDEAPFYTLGPLTTDIAPGYDHITSGIGAAMIGWFGCAMLCYVTPKEHLGLPNKDDVKTGIITYKIAAHAADLAKGHPGAQIRDNALSKARFEFRWEDQFNLGLDPDTARSYHDETLPKDSAKVAHFCSMCGPKFCSMKITQEVREYAANQRIEAVDVDVAKGLAEQAERFKQEGSQLYKKV.

The interval M1–S21 is disordered. Substrate-binding positions include N233, M262, Y291, H327, S347 to G349, D388 to R391, and E427. H431 lines the Zn(2+) pocket. Residue Y454 coordinates substrate. H495 is a Zn(2+) binding site. The [4Fe-4S] cluster site is built by C575, C578, and C583.

It belongs to the ThiC family. As to quaternary structure, homodimer. Requires [4Fe-4S] cluster as cofactor.

The enzyme catalyses 5-amino-1-(5-phospho-beta-D-ribosyl)imidazole + S-adenosyl-L-methionine = 4-amino-2-methyl-5-(phosphooxymethyl)pyrimidine + CO + 5'-deoxyadenosine + formate + L-methionine + 3 H(+). The protein operates within cofactor biosynthesis; thiamine diphosphate biosynthesis. Its function is as follows. Catalyzes the synthesis of the hydroxymethylpyrimidine phosphate (HMP-P) moiety of thiamine from aminoimidazole ribotide (AIR) in a radical S-adenosyl-L-methionine (SAM)-dependent reaction. The sequence is that of Phosphomethylpyrimidine synthase from Pseudomonas syringae pv. syringae (strain B728a).